The following is a 132-amino-acid chain: Small ribosomal subunit protein uS8 (132 aa).

It belongs to the universal ribosomal protein uS8 family. In terms of assembly, part of the 30S ribosomal subunit. Contacts proteins S5 and S12.

Functionally, one of the primary rRNA binding proteins, it binds directly to 16S rRNA central domain where it helps coordinate assembly of the platform of the 30S subunit. This is Small ribosomal subunit protein uS8 from Bacillus pumilus (strain SAFR-032).